The sequence spans 547 residues: Apolipoprotein N-acyltransferase (547 aa).

The next 5 membrane-spanning stretches (helical) occupy residues 31–51 (ILSG…ALIF), 71–91 (FWAG…WIAY), 106–126 (LALL…VAAG), 180–200 (LVGF…MGYV), and 210–230 (ALSH…WGFW). The 269-residue stretch at 247-515 (VQANIGNLEK…KYLKNAPLTF (269 aa)) folds into the CN hydrolase domain. The active-site Proton acceptor is the Glu-294. The active site involves Lys-364. Catalysis depends on Cys-418, which acts as the Nucleophile. A helical membrane pass occupies residues 515 to 535 (FFVQWGHWDWIVILLVLGAVI).

It belongs to the CN hydrolase family. Apolipoprotein N-acyltransferase subfamily.

The protein localises to the cell inner membrane. The enzyme catalyses N-terminal S-1,2-diacyl-sn-glyceryl-L-cysteinyl-[lipoprotein] + a glycerophospholipid = N-acyl-S-1,2-diacyl-sn-glyceryl-L-cysteinyl-[lipoprotein] + a 2-acyl-sn-glycero-3-phospholipid + H(+). The protein operates within protein modification; lipoprotein biosynthesis (N-acyl transfer). Catalyzes the phospholipid dependent N-acylation of the N-terminal cysteine of apolipoprotein, the last step in lipoprotein maturation. The protein is Apolipoprotein N-acyltransferase of Bdellovibrio bacteriovorus (strain ATCC 15356 / DSM 50701 / NCIMB 9529 / HD100).